Consider the following 40-residue polypeptide: Submaxillary gland androgen-regulated protein 2, isoform epsilon (40 aa).

The signal sequence occupies residues 1-20 (MKALYMVFVLWVLIGCFLRC).

Its subcellular location is the secreted. In terms of biological role, may play a role in protection or detoxification. This chain is Submaxillary gland androgen-regulated protein 2, isoform epsilon (Smr2), found in Mus musculus (Mouse).